Consider the following 345-residue polypeptide: Class I histocompatibility antigen, F10 alpha chain (345 aa).

Positions 1–22 are cleaved as a signal peptide; that stretch reads MGPCGALGLGLLLAAVCGAAAP. Positions 23–110 are alpha-1; the sequence is ELHTLRYIQT…ILQRRYNQTG (88 aa). Over 23 to 301 the chain is Extracellular; that stretch reads ELHTLRYIQT…WEPPQPNLVP (279 aa). N-linked (GlcNAc...) asparagine glycans are attached at residues Asn59 and Asn107. Residues 111–201 form an alpha-2 region; it reads GSHTVQWMYG…EYGKAELGRR (91 aa). Cystine bridges form between Cys121-Cys183 and Cys221-Cys277. The segment at 202-292 is alpha-3; it reads ERPEVRVWGK…SLPQPGLYSW (91 aa). The Ig-like C1-type domain occupies 204–293; it reads PEVRVWGKEA…LPQPGLYSWE (90 aa). The interval 293 to 301 is connecting peptide; that stretch reads EPPQPNLVP. A helical transmembrane segment spans residues 302–324; that stretch reads IVAGVAVAIVAIAIMVGVGFIIY. Residues 325–345 lie on the Cytoplasmic side of the membrane; that stretch reads RRHAGKKGKGYNIAPGSNPAI.

It belongs to the MHC class I family. In terms of assembly, heterodimer of an alpha chain and a beta chain (beta-2-microglobulin).

The protein resides in the membrane. Its function is as follows. Involved in the presentation of foreign antigens to the immune system. This is Class I histocompatibility antigen, F10 alpha chain from Gallus gallus (Chicken).